The sequence spans 556 residues: MESMVAPGEVLMSQAIQPAHADSRGELSAGQLLKWMDTTACLAAEKHAGISCVTASMDDILFEDTARIGQIITIRAKVTRAFSTSMEISIKVIVQDKFTGIQKLLCVAFSTFVAKPVGKEKVHLKPVLLQTEQEQVEHNLASERRKVRLQHENTFNNIMKESSRFSDSICNEEEGTATTMGTSVQSIELVLPPHANHHGNTFGGQIMAWMETVATISASRLCHGHPFLKSVDMFKFRGPSTVGDRLVFSAIVNNTFQNSVEVGVRVEAFDCQEWAEGQGRHINSAFLIYNAVDDQEKLITFPRIQPISKDDFRRYQGAIARRRIRLGRKYVISHKKEVPLSAQWDISKKGSLSNTNVEALKNLASKSGWEITTTLEKIKIYTLEEQDAISVKVEKLVGSPAHIAYHLLSDLTKRPLWDPHYISCEVIDQVSEDDQIYYITCSVVNGDKPKDFVVLVSRRKPLKDNNTYTVALRSVVLPSVPSSPQYIRSEVICAGFLIQAVDSNSCTVTYLNQMSDSILPYFAGNIGGWSKSIEEAAASCIKFIENATPDGLKSVL.

One can recognise a HotDog ACOT-type 1 domain in the interval 6–118; sequence APGEVLMSQA…FSTFVAKPVG (113 aa). Lys-34 is modified (N6-succinyllysine). CoA-binding positions include 54-56 and 83-85; these read TAS and STS. Lys-97 carries the post-translational modification N6-succinyllysine. Arg-145 provides a ligand contact to CoA. N6-succinyllysine occurs at positions 160 and 229. The HotDog ACOT-type 2 domain maps to 180-295; that stretch reads MGTSVQSIEL…FLIYNAVDDQ (116 aa). 235 to 237 lines the CoA pocket; sequence KFR. The START domain maps to 327–536; it reads GRKYVISHKK…GGWSKSIEEA (210 aa).

In terms of assembly, homodimer or homotetramer.

It localises to the cytoplasm. The protein localises to the cytosol. It catalyses the reaction acetyl-CoA + H2O = acetate + CoA + H(+). The catalysed reaction is butanoyl-CoA + H2O = butanoate + CoA + H(+). The enzyme catalyses hexanoyl-CoA + H2O = hexanoate + CoA + H(+). The protein operates within lipid metabolism; fatty acid metabolism. Its activity is regulated as follows. Allosterically regulated by ATP (activator) and ADP (inhibitor). Cold labile, it dissociates into inactive monomers at low temperature. In terms of biological role, catalyzes the hydrolysis of acyl-CoAs into free fatty acids and coenzyme A (CoASH), regulating their respective intracellular levels. Preferentially hydrolyzes acetyl-CoA. The protein is Acetyl-coenzyme A thioesterase (Acot12) of Mus musculus (Mouse).